Consider the following 105-residue polypeptide: uncharacterized protein (105 aa).

The next 3 membrane-spanning stretches (helical) occupy residues 14-34 (ILLMLRLAVTAVAVFLAIVAW), 41-61 (ETVCFIAGVLCMYLAQLFAFL), and 80-100 (VGFTLELLPLACFIASLIFTI).

It localises to the cell membrane. This is an uncharacterized protein from Treponema pallidum (strain Nichols).